Here is a 298-residue protein sequence, read N- to C-terminus: Acetyl-coenzyme A carboxylase carboxyl transferase subunit beta 1 (298 aa).

A CoA carboxyltransferase N-terminal domain is found at 26–294 (MWVKCPSCGD…RAADVQNAPA (269 aa)). Zn(2+) is bound by residues Cys-30, Cys-33, Cys-49, and Cys-51. The C4-type zinc-finger motif lies at 30–51 (CPSCGDLIYTRQFSDNLKVCKC).

It belongs to the AccD/PCCB family. In terms of assembly, acetyl-CoA carboxylase is a heterohexamer composed of biotin carboxyl carrier protein (AccB), biotin carboxylase (AccC) and two subunits each of ACCase subunit alpha (AccA) and ACCase subunit beta (AccD). The cofactor is Zn(2+).

The protein resides in the cytoplasm. It carries out the reaction N(6)-carboxybiotinyl-L-lysyl-[protein] + acetyl-CoA = N(6)-biotinyl-L-lysyl-[protein] + malonyl-CoA. It functions in the pathway lipid metabolism; malonyl-CoA biosynthesis; malonyl-CoA from acetyl-CoA: step 1/1. Its function is as follows. Component of the acetyl coenzyme A carboxylase (ACC) complex. Biotin carboxylase (BC) catalyzes the carboxylation of biotin on its carrier protein (BCCP) and then the CO(2) group is transferred by the transcarboxylase to acetyl-CoA to form malonyl-CoA. The polypeptide is Acetyl-coenzyme A carboxylase carboxyl transferase subunit beta 1 (Roseiflexus castenholzii (strain DSM 13941 / HLO8)).